A 205-amino-acid chain; its full sequence is Probable thymidylate kinase (205 aa).

7 to 14 (GIDGSGKS) is an ATP binding site.

This sequence belongs to the thymidylate kinase family.

The catalysed reaction is dTMP + ATP = dTDP + ADP. The protein is Probable thymidylate kinase of Methanoculleus marisnigri (strain ATCC 35101 / DSM 1498 / JR1).